The following is a 282-amino-acid chain: 4-hydroxy-3-methylbut-2-enyl diphosphate reductase (282 aa).

Cysteine 12 contacts [4Fe-4S] cluster. Residues histidine 40 and histidine 72 each coordinate (2E)-4-hydroxy-3-methylbut-2-enyl diphosphate. Dimethylallyl diphosphate contacts are provided by histidine 40 and histidine 72. The isopentenyl diphosphate site is built by histidine 40 and histidine 72. Position 94 (cysteine 94) interacts with [4Fe-4S] cluster. Histidine 122 provides a ligand contact to (2E)-4-hydroxy-3-methylbut-2-enyl diphosphate. Position 122 (histidine 122) interacts with dimethylallyl diphosphate. Histidine 122 is an isopentenyl diphosphate binding site. Residue glutamate 124 is the Proton donor of the active site. Residue threonine 160 participates in (2E)-4-hydroxy-3-methylbut-2-enyl diphosphate binding. Residue cysteine 188 participates in [4Fe-4S] cluster binding. (2E)-4-hydroxy-3-methylbut-2-enyl diphosphate is bound by residues serine 216, asparagine 218, and serine 260. Positions 216, 218, and 260 each coordinate dimethylallyl diphosphate. Isopentenyl diphosphate contacts are provided by serine 216, asparagine 218, and serine 260.

The protein belongs to the IspH family. [4Fe-4S] cluster serves as cofactor.

It catalyses the reaction isopentenyl diphosphate + 2 oxidized [2Fe-2S]-[ferredoxin] + H2O = (2E)-4-hydroxy-3-methylbut-2-enyl diphosphate + 2 reduced [2Fe-2S]-[ferredoxin] + 2 H(+). The enzyme catalyses dimethylallyl diphosphate + 2 oxidized [2Fe-2S]-[ferredoxin] + H2O = (2E)-4-hydroxy-3-methylbut-2-enyl diphosphate + 2 reduced [2Fe-2S]-[ferredoxin] + 2 H(+). Its pathway is isoprenoid biosynthesis; dimethylallyl diphosphate biosynthesis; dimethylallyl diphosphate from (2E)-4-hydroxy-3-methylbutenyl diphosphate: step 1/1. It functions in the pathway isoprenoid biosynthesis; isopentenyl diphosphate biosynthesis via DXP pathway; isopentenyl diphosphate from 1-deoxy-D-xylulose 5-phosphate: step 6/6. Functionally, catalyzes the conversion of 1-hydroxy-2-methyl-2-(E)-butenyl 4-diphosphate (HMBPP) into a mixture of isopentenyl diphosphate (IPP) and dimethylallyl diphosphate (DMAPP). Acts in the terminal step of the DOXP/MEP pathway for isoprenoid precursor biosynthesis. This is 4-hydroxy-3-methylbut-2-enyl diphosphate reductase from Geobacter metallireducens (strain ATCC 53774 / DSM 7210 / GS-15).